Here is a 103-residue protein sequence, read N- to C-terminus: Small ribosomal subunit protein uS10 (103 aa).

The protein belongs to the universal ribosomal protein uS10 family. In terms of assembly, part of the 30S ribosomal subunit.

Functionally, involved in the binding of tRNA to the ribosomes. This chain is Small ribosomal subunit protein uS10, found in Xanthomonas campestris pv. campestris (strain B100).